Reading from the N-terminus, the 1072-residue chain is E3 ubiquitin-protein ligase RNF31 (1072 aa).

The segment at 1–485 (MPGEEEERAF…PEKQRQDKMR (485 aa)) is polyubiquitin-binding. Residues 71–142 (TLSTALNILE…SFPEGQEEPD (72 aa)) enclose the PUB domain. Residues 263-290 (QGTHLSPSLPASAQPRPQSTSLLALGDS) are disordered. A compositionally biased stretch (polar residues) spans 265–280 (THLSPSLPASAQPRPQ). Positions 281–290 (STSLLALGDS) are enriched in low complexity. RanBP2-type zinc fingers lie at residues 299–329 (SAHL…PRGC) and 350–379 (ARGR…PRLA). A Phosphoserine modification is found at Ser383. A RanBP2-type 3 zinc finger spans residues 409–438 (QSQVWYCIHCTFCNSSPGWVCVMCNRTSSP). Residues 443–484 (HAPRPYASSLEKGPPKPGPPRRLSAPLPSSCGDPEKQRQDKM) form a disordered region. Low complexity predominate over residues 463–472 (RRLSAPLPSS). Position 466 is a phosphoserine (Ser466). Residues 475 to 484 (DPEKQRQDKM) show a composition bias toward basic and acidic residues. The tract at residues 563 to 616 (GNLDEAVEECVRTRRRKVQELQSLGFGPEEGSLQALFQHGGDVSRALTELQRQR) is interaction with RBCK1. One can recognise a UBA domain in the interval 564 to 615 (NLDEAVEECVRTRRRKVQELQSLGFGPEEGSLQALFQHGGDVSRALTELQRQ). A TRIAD supradomain region spans residues 695–929 (LAQECAVCGW…KSLHGHHPRD (235 aa)). Zn(2+) contacts are provided by Cys699, Cys702, Cys717, Cys719, Cys722, and Cys725. The RING-type 1 zinc-finger motif lies at 699-749 (CAVCGWALPHNRMQALTSCECTICPDCFRQHFTIALKEKHITDMVCPACGR). Lys735 participates in a covalent cross-link: (Microbial infection) Glycyl lysine isopeptide (Lys-Gly) (interchain with G-Cter in ubiquitin). Residues Cys744 and Cys747 each coordinate Zn(2+). The IBR-type zinc finger occupies 779–841 (ALFHKKLTEG…WEEQHRGRSC (63 aa)). Residue Lys783 forms a (Microbial infection) Glycyl lysine isopeptide (Lys-Gly) (interchain with G-Cter in ubiquitin) linkage. Zn(2+) is bound by residues Cys799, Cys802, Cys817, Cys820, Cys825, Cys828, His836, Cys841, Cys871, and Cys874. The RING-type 2; atypical zinc finger occupies 871–901 (CPKCKFSYALARGGCMHFHCTQCRHQFCSGC). A (Microbial infection) Glycyl lysine isopeptide (Lys-Gly) (interchain with G-Cter in ubiquitin) cross-link involves residue Lys875. The active site involves Cys885. 6 residues coordinate Zn(2+): Cys890, Cys893, Cys898, Cys901, Cys916, and His925. An LDD domain region spans residues 910–1072 (KCPEPNCRVK…LGQSIPRRRK (163 aa)).

Belongs to the RBR family. As to quaternary structure, component of the LUBAC complex (linear ubiquitin chain assembly complex) which consists of SHARPIN, RBCK1 and RNF31. LUBAC has a MW of approximately 600 kDa suggesting a heteromultimeric assembly of its subunits. Associates with the TNF-R1 signaling complex (TNF-RSC) in a stimulation-dependent manner. Interacts (via the PUB domain) with OTULIN (via the PIM motif); the interaction is direct. Interacts (via the PUB domain) with VCP (via the PIM motif). Interacts (via the PUB domain) with SPATA2 (via the PIM motif); interaction is direct and bridges RNF31 and CYLD. Interacts with CYLD; the interaction is indirect and is mediated via SPATA2. Interacts with MUSK. Interacts with CARD11, promoting linear ubiquitination of BCL10. (Microbial infection) Interacts with S.flexneri E3 ubiquitin-protein ligases IpaH1.4 and IpaH2.5, leading to its ubiquitination. Post-translationally, autoubiquitinated. Interaction with OTULIN is required to suppress formation of 'Met-1'-linked polyubiquitin chains and prevent subsequent inactivation of the LUBAC complex. In terms of processing, cleaved by caspase during apoptosis. (Microbial infection) Ubiquitinated by S.flexneri E3 ubiquitin-protein ligases IpaH1.4 and IpaH2.5, leading to its degradation by the proteasome, thereby preventing formation of the bacterial ubiquitin coat and activation of innate immunity. As to expression, expressed in both normal and transformed breast epithelial cell lines.

The protein localises to the cytoplasm. It catalyses the reaction [E2 ubiquitin-conjugating enzyme]-S-ubiquitinyl-L-cysteine + [acceptor protein]-L-lysine = [E2 ubiquitin-conjugating enzyme]-L-cysteine + [acceptor protein]-N(6)-ubiquitinyl-L-lysine.. Its pathway is protein modification; protein ubiquitination. In terms of biological role, E3 ubiquitin-protein ligase component of the LUBAC complex which conjugates linear ('Met-1'-linked) polyubiquitin chains to substrates and plays a key role in NF-kappa-B activation and regulation of inflammation. LUBAC conjugates linear polyubiquitin to IKBKG and RIPK1 and is involved in activation of the canonical NF-kappa-B and the JNK signaling pathways. Linear ubiquitination mediated by the LUBAC complex interferes with TNF-induced cell death and thereby prevents inflammation. LUBAC is recruited to the TNF-R1 signaling complex (TNF-RSC) following polyubiquitination of TNF-RSC components by BIRC2 and/or BIRC3 and to conjugate linear polyubiquitin to IKBKG and possibly other components contributing to the stability of the complex. The LUBAC complex is also involved in innate immunity by conjugating linear polyubiquitin chains at the surface of bacteria invading the cytosol to form the ubiquitin coat surrounding bacteria. LUBAC is not able to initiate formation of the bacterial ubiquitin coat, and can only promote formation of linear polyubiquitins on pre-existing ubiquitin. Recruited to the surface of bacteria by RNF213, which initiates the bacterial ubiquitin coat. The bacterial ubiquitin coat acts as an 'eat-me' signal for xenophagy and promotes NF-kappa-B activation. Together with OTULIN, the LUBAC complex regulates the canonical Wnt signaling during angiogenesis. RNF31 is required for linear ubiquitination of BCL10, thereby promoting TCR-induced NF-kappa-B activation. Binds polyubiquitin of different linkage types. The protein is E3 ubiquitin-protein ligase RNF31 of Homo sapiens (Human).